The sequence spans 226 residues: UPF0758 protein SGO_1229 (226 aa).

The 123-residue stretch at R103–L225 folds into the MPN domain. 3 residues coordinate Zn(2+): H174, H176, and D187. The short motif at H174–D187 is the JAMM motif element.

The protein belongs to the UPF0758 family.

The protein is UPF0758 protein SGO_1229 of Streptococcus gordonii (strain Challis / ATCC 35105 / BCRC 15272 / CH1 / DL1 / V288).